The primary structure comprises 533 residues: Calcium/calmodulin-dependent protein kinase type II (533 aa).

Residues 18–26 (LGKGAFSVV) and Lys41 contribute to the ATP site. The active-site Proton acceptor is the Asp134. Thr284 is modified (phosphothreonine; by autocatalysis). Polar residues-rich tracts occupy residues 316-345 (TSDS…QPTS) and 377-391 (PPST…SQTI). Disordered regions lie at residues 316 to 347 (TSDS…TSPA) and 369 to 400 (LLNK…EKAQ).

Belongs to the protein kinase superfamily. CAMK Ser/Thr protein kinase family. CaMK subfamily. As to quaternary structure, dodecamer. Subunits are tightly packed around a central ring-shaped scaffold with extensive contacts between the regulatory segment of one kinase and the catalytic domain of another enabling cooperative activation of a subunit by the adjacent molecule. Interacts with and phosphorylates daf-16; the interaction promotes daf-16 nuclear localization. Interacts with egl-2 and tir-1. Interacts with nsy-1. It depends on Mg(2+) as a cofactor.

It is found in the cytoplasm. The protein resides in the cell projection. The protein localises to the axon. It localises to the perikaryon. The enzyme catalyses L-seryl-[protein] + ATP = O-phospho-L-seryl-[protein] + ADP + H(+). The catalysed reaction is L-threonyl-[protein] + ATP = O-phospho-L-threonyl-[protein] + ADP + H(+). Its activity is regulated as follows. Ca(2+)/calmodulin binding removes an autoinhibitory regulatory segment located C-terminal to the kinase domain. This releases the catalytic activity of the enzyme and makes accessible a regulatory residue Thr-284. Phosphorylation of Thr-284 by another kinase domain within the oligomeric holoenzyme keeps CaMKII active in the absence of Ca(2+)/calmodulin by preventing the rebinding of the regulatory segment to the kinase domain and by increasing the affinity of calmodulin for the enzyme. Can respond to high-frequency Ca(2+) pulses to become Ca(2+) independent. Role in locomotion and neuronal cell fate specification. Required for the regulation of synaptic density, egg laying, defecation, and meiotic maturation. Required for viability under chronic osmotic stress in which it acts downstream of osr-1. Regulates the synaptic trafficking of glr-1. Bidirectional modulator of neurotransmitter release with negative modulatory effects mainly mediated via slo-1 activation. May suppress the functional response to an internal pacemaker, perhaps by modulating the activity of the IP3 receptor. This Caenorhabditis briggsae protein is Calcium/calmodulin-dependent protein kinase type II.